We begin with the raw amino-acid sequence, 552 residues long: L-ascorbate oxidase (552 aa).

2 Plastocyanin-like domains span residues 1–122 (SQIR…LIVD) and 134–300 (DGEI…NYLP). 3 disulfide bridges follow: cysteine 19–cysteine 201, cysteine 81–cysteine 538, and cysteine 180–cysteine 193. Positions 60 and 62 each coordinate Cu cation. A glycan (N-linked (GlcNAc...) asparagine) is linked at asparagine 92. Cu cation-binding residues include histidine 104 and histidine 106. 2 N-linked (GlcNAc...) asparagine glycosylation sites follow: asparagine 325 and asparagine 440. The 180-residue stretch at 344-523 (NRRIFLLNTQ…HMGMGVVFAE (180 aa)) folds into the Plastocyanin-like 3 domain. Positions 445, 448, 450, 506, 507, 508, 512, and 517 each coordinate Cu cation.

Belongs to the multicopper oxidase family. Dimer. Cu cation serves as cofactor.

Its subcellular location is the secreted. The enzyme catalyses 4 L-ascorbate + O2 = 4 monodehydro-L-ascorbate radical + 2 H2O. Functionally, may be involved in a redox system involving ascorbic acid. This chain is L-ascorbate oxidase, found in Cucurbita pepo var. melopepo (Zucchini).